Reading from the N-terminus, the 479-residue chain is Probable phosphatidate cytidylyltransferase (479 aa).

The segment covering 1–28 (MRTDNIRNRKEQLKKQEKKDFDSSKDEE) has biased composition (basic and acidic residues). Residues 1–71 (MRTDNIRNRK…NNNNNNNNIK (71 aa)) are disordered. The Cytoplasmic portion of the chain corresponds to 1-108 (MRTDNIRNRK…LAIRSVMGAF (108 aa)). The segment covering 53-69 (NKNIINQKTNNNNNNNN) has biased composition (low complexity). Residues 109 to 129 (MIGFFTIVLSTDHFIVALFVI) form a helical membrane-spanning segment. The Extracellular segment spans residues 130 to 159 (ALQLLVFKEMIALRYIEAKEKKIPHFRTLN). The chain crosses the membrane as a helical span at residues 160-180 (WFFLFTSFFFFYAKPILITLA). Residues 181–192 (NYYPDIFQHFVR) are Cytoplasmic-facing. The helical transmembrane segment at 193-213 (YHLWHSFSLYCIGFVLFILTL) threads the bilayer. The Extracellular segment spans residues 214 to 240 (RKGVYRYQFSQLTWTLMILMMVVVQSN). The chain crosses the membrane as a helical span at residues 241–261 (FLISNIYQGLIWFILPVSIIV). Residues 262–293 (CNDIFAYFNGFFLGKKFINRPLMKISPNKTWE) lie on the Cytoplasmic side of the membrane. A helical membrane pass occupies residues 294–314 (GFIGATGWTLLFAYYFCGFLL). At 315–375 (KYDWIVCPKG…FTYIPIQFHA (61 aa)) the chain is on the extracellular side. Residues 376–396 (LVLALFGSLIAPFGGFFASGI) traverse the membrane as a helical segment. The Cytoplasmic segment spans residues 397-479 (KRAYKVKDFD…IEFTTGTITA (83 aa)).

The protein belongs to the CDS family.

Its subcellular location is the membrane. It carries out the reaction a 1,2-diacyl-sn-glycero-3-phosphate + CTP + H(+) = a CDP-1,2-diacyl-sn-glycerol + diphosphate. It participates in phospholipid metabolism; CDP-diacylglycerol biosynthesis; CDP-diacylglycerol from sn-glycerol 3-phosphate: step 3/3. This is Probable phosphatidate cytidylyltransferase (cdsA) from Dictyostelium discoideum (Social amoeba).